We begin with the raw amino-acid sequence, 80 residues long: uncharacterized protein (80 aa).

This is an uncharacterized protein from Schizosaccharomyces pombe (strain 972 / ATCC 24843) (Fission yeast).